The chain runs to 376 residues: Queuine tRNA-ribosyltransferase (376 aa).

Residue D89 is the Proton acceptor of the active site. Substrate contacts are provided by residues 89–93, D143, Q194, and G221; that span reads DSGGF. The RNA binding stretch occupies residues 252 to 258; the sequence is GVGIPSN. Catalysis depends on D271, which acts as the Nucleophile. Positions 276 to 280 are RNA binding; important for wobble base 34 recognition; sequence ARNGR. C309, C311, C314, and H340 together coordinate Zn(2+).

Belongs to the queuine tRNA-ribosyltransferase family. As to quaternary structure, homodimer. Within each dimer, one monomer is responsible for RNA recognition and catalysis, while the other monomer binds to the replacement base PreQ1. Requires Zn(2+) as cofactor.

The catalysed reaction is 7-aminomethyl-7-carbaguanine + guanosine(34) in tRNA = 7-aminomethyl-7-carbaguanosine(34) in tRNA + guanine. Its pathway is tRNA modification; tRNA-queuosine biosynthesis. In terms of biological role, catalyzes the base-exchange of a guanine (G) residue with the queuine precursor 7-aminomethyl-7-deazaguanine (PreQ1) at position 34 (anticodon wobble position) in tRNAs with GU(N) anticodons (tRNA-Asp, -Asn, -His and -Tyr). Catalysis occurs through a double-displacement mechanism. The nucleophile active site attacks the C1' of nucleotide 34 to detach the guanine base from the RNA, forming a covalent enzyme-RNA intermediate. The proton acceptor active site deprotonates the incoming PreQ1, allowing a nucleophilic attack on the C1' of the ribose to form the product. After dissociation, two additional enzymatic reactions on the tRNA convert PreQ1 to queuine (Q), resulting in the hypermodified nucleoside queuosine (7-(((4,5-cis-dihydroxy-2-cyclopenten-1-yl)amino)methyl)-7-deazaguanosine). This is Queuine tRNA-ribosyltransferase from Clostridium botulinum (strain Hall / ATCC 3502 / NCTC 13319 / Type A).